The primary structure comprises 588 residues: MNKRTTYCGLVTEEFLNEKVTLKGWVHNRRDLGGLIFVDLRDREGIVQIVFNPDFSEEALQVAETVRSEYVVEVEGVVTKRDAETINPKIKTGQVEVQVSNIEIINKSETPPFSINEENVNVDENIRLKYRYLDLRRQELAQTFKMRHQTTRSIRQYLDNNGFFDIETPVLTKSTPEGARDYLVPSRVHEGEFYALPQSPQLFKQLLMISGFDKYYQIVKCFRDEDLRADRQPEFTQVDIEMSFVDQEDIIAMGEDMLRKVVKDVKGIDVSGPFPRMTYAEAMDRFGSDKPDTRFGMELINVSQLGKEMNFKVFKDTVDNNGEIKAIVAKDAANKYTRKDMDALTEFVNIYGAKGLAWVKVVDDGLSGPIARFFEDVNVETLKQLTEAKPGDLVMFVADKPNVVAQSLGALRIKLAKELGLIDESKLNFLWVTDWPLLEYDEDAKRYVAAHHPFTSPKREDIEKLDTEPENVQANAYDIVLNGYELGGGSIRIHDGELQQKMFEVLGFTNEQAQEQFGFLLDAFKYGAPPHGGIALGLDRLVMLLTNRTNLRDTIAFPKTASATCLLTDAPGEVSDKQLQELSLRIRH.

Glutamate 177 serves as a coordination point for L-aspartate. Residues 201-204 form an aspartate region; it reads QLFK. Arginine 223 serves as a coordination point for L-aspartate. ATP contacts are provided by residues 223 to 225 and glutamine 232; that span reads RDE. Histidine 451 provides a ligand contact to L-aspartate. Glutamate 485 contacts ATP. Arginine 492 provides a ligand contact to L-aspartate. 537–540 provides a ligand contact to ATP; sequence GLDR.

Belongs to the class-II aminoacyl-tRNA synthetase family. Type 1 subfamily. Homodimer.

It is found in the cytoplasm. It carries out the reaction tRNA(Asp) + L-aspartate + ATP = L-aspartyl-tRNA(Asp) + AMP + diphosphate. Its function is as follows. Catalyzes the attachment of L-aspartate to tRNA(Asp) in a two-step reaction: L-aspartate is first activated by ATP to form Asp-AMP and then transferred to the acceptor end of tRNA(Asp). The sequence is that of Aspartate--tRNA ligase from Staphylococcus epidermidis (strain ATCC 35984 / DSM 28319 / BCRC 17069 / CCUG 31568 / BM 3577 / RP62A).